The chain runs to 310 residues: tRNA dimethylallyltransferase (310 aa).

24–31 (GPTASGKT) is an ATP binding site. 26-31 (TASGKT) lines the substrate pocket. The segment at 49–52 (DSRQ) is interaction with substrate tRNA.

The protein belongs to the IPP transferase family. Monomer. It depends on Mg(2+) as a cofactor.

It carries out the reaction adenosine(37) in tRNA + dimethylallyl diphosphate = N(6)-dimethylallyladenosine(37) in tRNA + diphosphate. Functionally, catalyzes the transfer of a dimethylallyl group onto the adenine at position 37 in tRNAs that read codons beginning with uridine, leading to the formation of N6-(dimethylallyl)adenosine (i(6)A). This is tRNA dimethylallyltransferase from Synechococcus sp. (strain CC9311).